Here is a 135-residue protein sequence, read N- to C-terminus: HTH-type transcriptional regulator DicA (135 aa).

The HTH cro/C1-type domain maps to 12–66 (IRYRRKNLKHTQRSLAKALKISHVSVSQWERGDSEPTGKNLFALSKVLQCSPTWI). The H-T-H motif DNA-binding region spans 23-42 (QRSLAKALKISHVSVSQWER).

This protein is a repressor of division inhibition gene dicB. This Escherichia coli (strain K12) protein is HTH-type transcriptional regulator DicA (dicA).